A 471-amino-acid chain; its full sequence is Protein hedgehog (471 aa).

Residue C85 is the site of N-palmitoyl cysteine attachment. Ca(2+)-binding residues include E149, E150, D155, T185, E186, D189, and D191. Residue G257 is the site of Cholesterol glycine ester attachment.

The protein belongs to the hedgehog family. As to quaternary structure, interacts with shf. Interacts with ptc and CG5504/l(2)tid. In terms of processing, the C-terminal part of the hedgehog protein precursor displays an autoproteolysis activity that results in the cleavage of the full-length protein into two parts (N-product and C-product). In addition, the C-terminal part displays a cholesterol transferase activity that results by the covalent attachment of a cholesterol moiety to the C-terminal of the newly generated N-product. The N-product is the active species in both local and long-range signaling, whereas the C-product has no signaling activity. Cholesterylation is required for N-product targeting to lipid rafts and multimerization. Post-translationally, N-palmitoylation by Rasp of the hedgehog N-product, within the secretory pathway, is required for the embryonic and larval patterning activities of the hedgehog signal. As to expression, in embryos, expression starts at stage 5 as a few stripes at the anterior and posterior ends, this expands to 17 stripes during stages 8-11. Expression is also seen in CNS and some PNS cells until stage 13-14, and in foregut, hindgut and salivary glands. In larvae, expression is seen in the posterior compartment of the wing, leg and antennal imaginal disks. In adults, high level of expression in specific regions of the proventriculus and hindgut, with slightly lower levels of expression in the posterior midgut. Relatively low levels of expression in the anterior midgut region.

It is found in the nucleus. Its subcellular location is the cytoplasm. It localises to the cell membrane. It carries out the reaction glycyl-L-cysteinyl-[protein] + cholesterol + H(+) = [protein]-C-terminal glycyl cholesterol ester + N-terminal L-cysteinyl-[protein]. In terms of biological role, the C-terminal part of the hedgehog protein precursor displays an autoproteolysis activity that results in the cleavage of the full-length protein into two parts (N-product and C-product). In addition, the C-terminal part displays a cholesterol transferase activity that results by the covalent attachment of a cholesterol moiety to the C-terminal of the newly generated N-product. Once cleaved, the C-product has no signaling activity and diffuses from the cell. The dually lipidated hedgehog protein N-product is a morphogen which is essential for a variety of patterning events during development. Establishes the anterior-posterior axis of the embryonic segments and patterns the larval imaginal disks. Binds to the patched (ptc) receptor, which functions in association with smoothened (smo), to activate the transcription of target genes wingless (wg), decapentaplegic (dpp) and ptc. In the absence of hh, ptc represses the constitutive signaling activity of smo through fused (fu). Essential component of a signaling pathway which regulates the Duox-dependent gut immune response to bacterial uracil; required to activate Cad99C-dependent endosome formation, norpA-dependent Ca2+ mobilization and p38 MAPK, which are essential steps in the Duox-dependent production of reactive oxygen species (ROS) in response to intestinal bacterial infection. During photoreceptor differentiation, it up-regulates transcription of Ubr3, which in turn promotes the hh-signaling pathway by mediating the ubiquitination and degradation of cos. The protein is Protein hedgehog of Drosophila melanogaster (Fruit fly).